We begin with the raw amino-acid sequence, 389 residues long: Mitochondrial carrier homolog 1 (389 aa).

The disordered stretch occupies residues Met1–Ala78. Residues Met1–Thr93 lie on the Mitochondrial intermembrane side of the membrane. Residues Gly15–Pro33 show a composition bias toward gly residues. At Arg29 the chain carries Omega-N-methylarginine. Solcar repeat units lie at residues Thr81–Asp176 and Lys192–Tyr280. The chain crosses the membrane as a helical span at residues Ala94–Leu104. At Leu105–Arg155 the chain is on the cytoplasmic side. A helical transmembrane segment spans residues Leu156–Asp176. Over Glu177 to Arg209 the chain is Mitochondrial intermembrane. Residues Met210–Arg229 form a helical membrane-spanning segment. The Cytoplasmic segment spans residues Glu230 to Val254. Residues Gly255–Ala279 form a helical membrane-spanning segment. Topologically, residues Tyr280 to Ser322 are mitochondrial intermembrane. The helical transmembrane segment at Met323 to Leu342 threads the bilayer. Residues Arg343 to Arg371 lie on the Cytoplasmic side of the membrane. Residues Gly372–Glu389 traverse the membrane as a helical segment.

The protein belongs to the mitochondrial carrier (TC 2.A.29) family. As to quaternary structure, interacts with PSEN1.

The protein resides in the mitochondrion outer membrane. Its function is as follows. Protein insertase that mediates insertion of transmembrane proteins into the mitochondrial outer membrane. Catalyzes insertion of proteins with alpha-helical transmembrane regions, such as signal-anchored, tail-anchored and multi-pass membrane proteins. Does not mediate insertion of beta-barrel transmembrane proteins. May play a role in apoptosis. This is Mitochondrial carrier homolog 1 (Mtch1) from Mus musculus (Mouse).